Consider the following 375-residue polypeptide: Chaperone protein DnaJ (375 aa).

Residues 5–70 (DYYEVLGVER…GKRMAYDQYG (66 aa)) enclose the J domain. The segment at 134–212 (GTTVTIRVPT…CHGQGRVEEH (79 aa)) adopts a CR-type zinc-finger fold. 8 residues coordinate Zn(2+): C147, C150, C164, C167, C186, C189, C200, and C203. 4 CXXCXGXG motif repeats span residues 147–154 (CKTCDGSG), 164–171 (CTTCGGIG), 186–193 (CPRCHGSG), and 200–207 (CPDCHGQG).

This sequence belongs to the DnaJ family. As to quaternary structure, homodimer. Zn(2+) serves as cofactor.

Its subcellular location is the cytoplasm. Participates actively in the response to hyperosmotic and heat shock by preventing the aggregation of stress-denatured proteins and by disaggregating proteins, also in an autonomous, DnaK-independent fashion. Unfolded proteins bind initially to DnaJ; upon interaction with the DnaJ-bound protein, DnaK hydrolyzes its bound ATP, resulting in the formation of a stable complex. GrpE releases ADP from DnaK; ATP binding to DnaK triggers the release of the substrate protein, thus completing the reaction cycle. Several rounds of ATP-dependent interactions between DnaJ, DnaK and GrpE are required for fully efficient folding. Also involved, together with DnaK and GrpE, in the DNA replication of plasmids through activation of initiation proteins. The sequence is that of Chaperone protein DnaJ from Azotobacter vinelandii (strain DJ / ATCC BAA-1303).